We begin with the raw amino-acid sequence, 519 residues long: Sensor protein RprX (519 aa).

2 helical membrane-spanning segments follow: residues 5–25 (TIWI…YLQV) and 260–280 (IPSM…IYIV). Residues 296-517 (NMTHEFKTPI…KFIIALPLLK (222 aa)) form the Histidine kinase domain. H299 is modified (phosphohistidine; by autocatalysis).

It localises to the cell membrane. The enzyme catalyses ATP + protein L-histidine = ADP + protein N-phospho-L-histidine.. Its function is as follows. Member of the two-component regulatory system RprX/RprY. May activate RprY by phosphorylation. This Bacteroides fragilis (strain YCH46) protein is Sensor protein RprX (rprX).